Reading from the N-terminus, the 149-residue chain is Transcriptional regulator MraZ (149 aa).

2 consecutive SpoVT-AbrB domains span residues 6 to 52 (RSHR…PYPD) and 81 to 124 (AEEM…DQSK).

This sequence belongs to the MraZ family. As to quaternary structure, forms oligomers.

Its subcellular location is the cytoplasm. The protein resides in the nucleoid. This Nitratidesulfovibrio vulgaris (strain ATCC 29579 / DSM 644 / CCUG 34227 / NCIMB 8303 / VKM B-1760 / Hildenborough) (Desulfovibrio vulgaris) protein is Transcriptional regulator MraZ.